The chain runs to 629 residues: tRNA uridine 5-carboxymethylaminomethyl modification enzyme MnmG (629 aa).

FAD contacts are provided by residues G13–G18, V125, and S180. Residue G273–F287 participates in NAD(+) binding. Position 370 (Q370) interacts with FAD.

The protein belongs to the MnmG family. As to quaternary structure, homodimer. Heterotetramer of two MnmE and two MnmG subunits. FAD is required as a cofactor.

The protein resides in the cytoplasm. Its function is as follows. NAD-binding protein involved in the addition of a carboxymethylaminomethyl (cmnm) group at the wobble position (U34) of certain tRNAs, forming tRNA-cmnm(5)s(2)U34. This chain is tRNA uridine 5-carboxymethylaminomethyl modification enzyme MnmG, found in Salmonella agona (strain SL483).